Here is a 227-residue protein sequence, read N- to C-terminus: GTP:AMP phosphotransferase AK3, mitochondrial (227 aa).

The GTP site is built by Gly-17, Gly-19, Lys-20, Gly-21, and Thr-22. The residue at position 20 (Lys-20) is an N6-succinyllysine. Lys-34 bears the N6-acetyllysine mark. Residue Ser-37 is modified to Phosphoserine. The NMP stretch occupies residues 37 to 66 (SSGDLLRDNMLRGTEIGVLAKAFIDQGKLI). AMP-binding residues include Ser-38 and Arg-43. At Lys-57 the chain carries N6-succinyllysine. Lys-64 is a binding site for AMP. N6-acetyllysine; alternate occurs at positions 64 and 80. N6-succinyllysine; alternate is present on residues Lys-64 and Lys-80. AMP is bound by residues Gly-91, Arg-94, and Gln-98. Positions 127 to 164 (ARWIHPASGRVYNIEFNPPKTVGIDDLTGEPLIQREDD) are LID. Arg-128, Tyr-138, Asn-139, Arg-161, and Arg-172 together coordinate GTP. Lys-174 and Lys-189 each carry N6-acetyllysine; alternate. Residues Lys-174 and Lys-189 each carry the N6-succinyllysine; alternate modification. GTP is bound at residue Thr-201. Lys-203 carries the N6-acetyllysine modification.

Belongs to the adenylate kinase family. AK3 subfamily. In terms of assembly, monomer.

It localises to the mitochondrion matrix. It catalyses the reaction a ribonucleoside 5'-triphosphate + AMP = a ribonucleoside 5'-diphosphate + ADP. The enzyme catalyses GTP + AMP = GDP + ADP. The catalysed reaction is ITP + AMP = IDP + ADP. Functionally, mitochondrial adenylate kinase with a specific GTP:AMP phosphotransferase activity. Could also use ITP as phosphate donor. Its physiological function is to recycle GTP into GDP which is necessary for the TCA cycle in the mitochondrial matrix. This Pongo abelii (Sumatran orangutan) protein is GTP:AMP phosphotransferase AK3, mitochondrial.